The following is a 158-amino-acid chain: Transcription elongation factor GreA (158 aa).

Positions 10-75 (TKEGKEKLEQ…QMLENMIRNA (66 aa)) form a coiled coil.

Belongs to the GreA/GreB family.

Functionally, necessary for efficient RNA polymerase transcription elongation past template-encoded arresting sites. The arresting sites in DNA have the property of trapping a certain fraction of elongating RNA polymerases that pass through, resulting in locked ternary complexes. Cleavage of the nascent transcript by cleavage factors such as GreA or GreB allows the resumption of elongation from the new 3'terminus. GreA releases sequences of 2 to 3 nucleotides. This Geobacillus kaustophilus (strain HTA426) protein is Transcription elongation factor GreA.